Reading from the N-terminus, the 488-residue chain is Malonate-semialdehyde dehydrogenase (488 aa).

NAD(+) is bound by residues alanine 150, phenylalanine 152, lysine 176, glutamate 179, arginine 180, serine 229, and threonine 251. Residue cysteine 284 is the Nucleophile of the active site. Glutamate 382 contributes to the NAD(+) binding site.

The protein belongs to the aldehyde dehydrogenase family. IolA subfamily. As to quaternary structure, homotetramer.

The catalysed reaction is 3-oxopropanoate + NAD(+) + CoA + H2O = hydrogencarbonate + acetyl-CoA + NADH + H(+). It catalyses the reaction 2-methyl-3-oxopropanoate + NAD(+) + CoA + H2O = propanoyl-CoA + hydrogencarbonate + NADH + H(+). It participates in polyol metabolism; myo-inositol degradation into acetyl-CoA; acetyl-CoA from myo-inositol: step 7/7. Catalyzes the oxidation of malonate semialdehyde (MSA) and methylmalonate semialdehyde (MMSA) into acetyl-CoA and propanoyl-CoA, respectively. Is involved in a myo-inositol catabolic pathway. Bicarbonate, and not CO2, is the end-product of the enzymatic reaction. The polypeptide is Malonate-semialdehyde dehydrogenase (Listeria monocytogenes serotype 4a (strain HCC23)).